Consider the following 374-residue polypeptide: UPF0754 membrane protein SAB1779c (374 aa).

Transmembrane regions (helical) follow at residues Leu-4 to Ile-24 and Ser-354 to Val-374.

Belongs to the UPF0754 family.

It is found in the cell membrane. The chain is UPF0754 membrane protein SAB1779c from Staphylococcus aureus (strain bovine RF122 / ET3-1).